A 335-amino-acid polypeptide reads, in one-letter code: Dipeptide transport ATP-binding protein DppD (335 aa).

Residues 7–256 (VQNLHVSFTT…PQHPYTKGLL (250 aa)) enclose the ABC transporter domain. 41–48 (GESGCGKS) lines the ATP pocket.

Belongs to the ABC transporter superfamily.

Its subcellular location is the cell membrane. It catalyses the reaction a dipeptide(out) + ATP + H2O = a dipeptide(in) + ADP + phosphate + H(+). Probably part of the ABC transporter DppBCDE involved in dipeptide transport. Responsible for energy coupling to the transport system. The protein is Dipeptide transport ATP-binding protein DppD (dppD) of Bacillus subtilis (strain 168).